The following is a 234-amino-acid chain: Ribosomal RNA small subunit methyltransferase G (234 aa).

S-adenosyl-L-methionine contacts are provided by glycine 85, phenylalanine 90, and arginine 155.

Belongs to the methyltransferase superfamily. RNA methyltransferase RsmG family.

The protein resides in the cytoplasm. The enzyme catalyses guanosine(527) in 16S rRNA + S-adenosyl-L-methionine = N(7)-methylguanosine(527) in 16S rRNA + S-adenosyl-L-homocysteine. Functionally, specifically methylates the N7 position of guanine in position 527 of 16S rRNA. The protein is Ribosomal RNA small subunit methyltransferase G of Rhodopseudomonas palustris (strain BisB18).